A 270-amino-acid polypeptide reads, in one-letter code: Phospholysine phosphohistidine inorganic pyrophosphate phosphatase (270 aa).

Positions 17 and 19 each coordinate Mg(2+). Residues 17–19 (DIS), 54–55 (TN), and K189 each bind substrate. D214 contributes to the Mg(2+) binding site.

Belongs to the HAD-like hydrolase superfamily. In terms of assembly, homodimer. The cofactor is Mg(2+). As to expression, expressed in brain, and at lower levels in liver and kidney. Detected in thyroid (at protein level). Expressed in liver, kidney and moderately in brain.

The protein localises to the cytoplasm. The protein resides in the nucleus. The enzyme catalyses diphosphate + H2O = 2 phosphate + H(+). Phosphatase that hydrolyzes imidodiphosphate, 3-phosphohistidine and 6-phospholysine. Has broad substrate specificity and can also hydrolyze inorganic diphosphate, but with lower efficiency. In Homo sapiens (Human), this protein is Phospholysine phosphohistidine inorganic pyrophosphate phosphatase (LHPP).